The following is a 396-amino-acid chain: Deoxyuridine 5'-triphosphate nucleotidohydrolase (396 aa).

Substrate contacts are provided by residues 280–282 (RSS) and 380–381 (FG).

It belongs to the dUTPase family. The cofactor is Mg(2+).

The enzyme catalyses dUTP + H2O = dUMP + diphosphate + H(+). Its function is as follows. Involved in nucleotide metabolism: produces dUMP, the immediate precursor of thymidine nucleotides and decreases the intracellular concentration of dUTP to avoid uracil incorporation into viral DNA. The sequence is that of Deoxyuridine 5'-triphosphate nucleotidohydrolase from Varicella-zoster virus (strain Dumas) (HHV-3).